The following is a 295-amino-acid chain: Indole-3-glycerol phosphate synthase (295 aa).

It belongs to the TrpC family.

The catalysed reaction is 1-(2-carboxyphenylamino)-1-deoxy-D-ribulose 5-phosphate + H(+) = (1S,2R)-1-C-(indol-3-yl)glycerol 3-phosphate + CO2 + H2O. It functions in the pathway amino-acid biosynthesis; L-tryptophan biosynthesis; L-tryptophan from chorismate: step 4/5. This is Indole-3-glycerol phosphate synthase from Synechococcus sp. (strain ATCC 27144 / PCC 6301 / SAUG 1402/1) (Anacystis nidulans).